Reading from the N-terminus, the 376-residue chain is Chorismate synthase (376 aa).

NADP(+) contacts are provided by arginine 39 and arginine 45. FMN contacts are provided by residues 115–117, glycine 276, 291–295, and arginine 317; these read RSS and KPIPT.

It belongs to the chorismate synthase family. Homotetramer. The cofactor is FMNH2.

It catalyses the reaction 5-O-(1-carboxyvinyl)-3-phosphoshikimate = chorismate + phosphate. Its pathway is metabolic intermediate biosynthesis; chorismate biosynthesis; chorismate from D-erythrose 4-phosphate and phosphoenolpyruvate: step 7/7. Its function is as follows. Catalyzes the anti-1,4-elimination of the C-3 phosphate and the C-6 proR hydrogen from 5-enolpyruvylshikimate-3-phosphate (EPSP) to yield chorismate, which is the branch point compound that serves as the starting substrate for the three terminal pathways of aromatic amino acid biosynthesis. This reaction introduces a second double bond into the aromatic ring system. The sequence is that of Chorismate synthase from Thermotoga maritima (strain ATCC 43589 / DSM 3109 / JCM 10099 / NBRC 100826 / MSB8).